A 145-amino-acid polypeptide reads, in one-letter code: Holo-[acyl-carrier-protein] synthase (145 aa).

2 residues coordinate Mg(2+): Asp-9 and Glu-63.

The protein belongs to the P-Pant transferase superfamily. AcpS family. Mg(2+) serves as cofactor.

The protein resides in the cytoplasm. The enzyme catalyses apo-[ACP] + CoA = holo-[ACP] + adenosine 3',5'-bisphosphate + H(+). Functionally, transfers the 4'-phosphopantetheine moiety from coenzyme A to a Ser of acyl-carrier-protein. The protein is Holo-[acyl-carrier-protein] synthase of Burkholderia vietnamiensis (strain G4 / LMG 22486) (Burkholderia cepacia (strain R1808)).